Consider the following 140-residue polypeptide: MPTINQLVRKSRKALEKKSTAPALQKGYNSLNKKVTDASAPQKRGVCTSVKTVTPRKPNSALRKVARVRLTNGIEVSAYIPGEGHNLQEHSVVLIRGGRVKDLPGVRYHILRGTLDTAGVDKRRQSRSKYGAKRPKEAKK.

The interval 1–28 is disordered; it reads MPTINQLVRKSRKALEKKSTAPALQKGY. 3-methylthioaspartic acid is present on aspartate 102. Residues 119–140 form a disordered region; sequence GVDKRRQSRSKYGAKRPKEAKK. The span at 124 to 140 shows a compositional bias: basic residues; it reads RQSRSKYGAKRPKEAKK.

It belongs to the universal ribosomal protein uS12 family. In terms of assembly, part of the 30S ribosomal subunit. Contacts proteins S8 and S17. May interact with IF1 in the 30S initiation complex.

Its function is as follows. With S4 and S5 plays an important role in translational accuracy. Interacts with and stabilizes bases of the 16S rRNA that are involved in tRNA selection in the A site and with the mRNA backbone. Located at the interface of the 30S and 50S subunits, it traverses the body of the 30S subunit contacting proteins on the other side and probably holding the rRNA structure together. The combined cluster of proteins S8, S12 and S17 appears to hold together the shoulder and platform of the 30S subunit. The sequence is that of Small ribosomal subunit protein uS12 from Clostridioides difficile (strain 630) (Peptoclostridium difficile).